The sequence spans 216 residues: Refilin-B (216 aa).

The disordered stretch occupies residues 1-52 (MVGRLSLQDVPELVDTKKKGDGVLDSPDSGLPPSPSPSHWGLAAATGGGGER). 2 positions are modified to phosphoserine: Ser-6 and Ser-26.

It belongs to the Refilin family. In terms of assembly, interacts with FLNA and FLNB.

It localises to the cytoplasm. It is found in the cytoskeleton. In terms of biological role, involved in the regulation of the perinuclear actin network and nuclear shape through interaction with filamins. Plays an essential role in the formation of cartilaginous skeletal elements. The protein is Refilin-B of Rattus norvegicus (Rat).